Consider the following 1103-residue polypeptide: Ataxin-2 homolog (1103 aa).

A compositionally biased stretch (basic residues) spans 1–10 (MSQSKDKKKF). Positions 1-75 (MSQSKDKKKF…QQQQQQQQPF (75 aa)) are disordered. Residues 11–28 (VGGGGGGGGNNSGGGGYG) show a composition bias toward gly residues. Composition is skewed to low complexity over residues 33 to 44 (NNNNNNRNSSNN) and 56 to 73 (HHQQQQQQQQQQQQQQQQ). One can recognise a Sm domain in the interval 84-166 (RTVFMSMSLV…FLQITATGVV (83 aa)). The stretch at 258 to 287 (EFYKINQSVAEKKAQEIENEKSGNIHLLEE) forms a coiled coil. Disordered regions lie at residues 305 to 474 (VVRK…RESP), 516 to 557 (TNKS…APKS), 615 to 763 (LVIK…NNTT), 901 to 920 (HTMKPPGSLQPGGGGVVQPQ), and 930 to 1103 (QPQG…NQYH). Residues 312-356 (PTSTTSTTTSPPTQNPTPSSSVYIPPSKRNNNNNTPSTPSVTSPP) are compositionally biased toward low complexity. Residues 358–371 (VDKKHQQTHQDKKQ) are compositionally biased toward basic and acidic residues. Positions 366-403 (HQDKKQTQQQQQQQQQQQQQQQQQQQQQQQQQQQQQTQ) form a coiled coil. Residues 372–463 (TQQQQQQQQQ…NNTPTATNTN (92 aa)) show a composition bias toward low complexity. Polar residues predominate over residues 516 to 529 (TNKSMNKSGSNIST). Low complexity-rich tracts occupy residues 530–544 (TPVNGSGNVGPNGTP), 637–676 (PTQLSLSGSSTSTNTSTTSPPTTNTTTTTTTATNSTTPST), and 683–694 (TTTPITTTILTE). Positions 691-730 (ILTENKSDDKEKEKEKEKEKVDEKEKEKEKEKSDEKDKDQ) form a coiled coil. Residues 695–741 (NKSDDKEKEKEKEKEKVDEKEKEKEKEKSDEKDKDQSSTLVEKKDES) are compositionally biased toward basic and acidic residues. A compositionally biased stretch (low complexity) spans 742 to 763 (SSSSNTTTTTTNTTNNNNNNTT). A compositionally biased stretch (low complexity) spans 930–957 (QPQGGVVQPSAGGAPKTMYQQQQQQQQQ). Over residues 960 to 969 (QPGGPMGVQR) the composition is skewed to gly residues. Residues 974–984 (PPQQQPQQQQQ) show a composition bias toward low complexity. The span at 1020 to 1031 (YAVPHPQYPMPP) shows a compositional bias: pro residues. Residues 1062–1076 (QVVSQNSPQQDSPSN) are compositionally biased toward low complexity.

This sequence belongs to the ataxin-2 family.

In Dictyostelium discoideum (Social amoeba), this protein is Ataxin-2 homolog (atxn2).